The following is a 330-amino-acid chain: CRISPR-associated endonuclease Cas1 2 (330 aa).

Mn(2+)-binding residues include glutamate 156, histidine 222, and glutamate 237.

Belongs to the CRISPR-associated endonuclease Cas1 family. In terms of assembly, homodimer, forms a heterotetramer with a Cas2 homodimer. Requires Mg(2+) as cofactor. Mn(2+) is required as a cofactor.

CRISPR (clustered regularly interspaced short palindromic repeat), is an adaptive immune system that provides protection against mobile genetic elements (viruses, transposable elements and conjugative plasmids). CRISPR clusters contain spacers, sequences complementary to antecedent mobile elements, and target invading nucleic acids. CRISPR clusters are transcribed and processed into CRISPR RNA (crRNA). Acts as a dsDNA endonuclease. Involved in the integration of spacer DNA into the CRISPR cassette. This chain is CRISPR-associated endonuclease Cas1 2, found in Thermodesulfovibrio yellowstonii (strain ATCC 51303 / DSM 11347 / YP87).